The chain runs to 430 residues: Adenylosuccinate synthetase (430 aa).

GTP contacts are provided by residues 12-18 (GDEGKGK) and 40-42 (GHT). Aspartate 13 acts as the Proton acceptor in catalysis. Positions 13 and 40 each coordinate Mg(2+). IMP-binding positions include 13–16 (DEGK), 38–41 (NAGH), threonine 130, arginine 144, glutamine 224, threonine 239, and arginine 303. Residue histidine 41 is the Proton donor of the active site. 299-305 (TVTGRKR) lines the substrate pocket. Residues arginine 305, 331 to 333 (KLD), and 413 to 415 (STS) each bind GTP.

This sequence belongs to the adenylosuccinate synthetase family. In terms of assembly, homodimer. Requires Mg(2+) as cofactor.

The protein resides in the cytoplasm. It catalyses the reaction IMP + L-aspartate + GTP = N(6)-(1,2-dicarboxyethyl)-AMP + GDP + phosphate + 2 H(+). Its pathway is purine metabolism; AMP biosynthesis via de novo pathway; AMP from IMP: step 1/2. Its function is as follows. Plays an important role in the de novo pathway of purine nucleotide biosynthesis. Catalyzes the first committed step in the biosynthesis of AMP from IMP. In Cereibacter sphaeroides (strain KD131 / KCTC 12085) (Rhodobacter sphaeroides), this protein is Adenylosuccinate synthetase.